Reading from the N-terminus, the 246-residue chain is Probable transcriptional regulatory protein CA_C2295 (246 aa).

It belongs to the TACO1 family.

It is found in the cytoplasm. This chain is Probable transcriptional regulatory protein CA_C2295, found in Clostridium acetobutylicum (strain ATCC 824 / DSM 792 / JCM 1419 / IAM 19013 / LMG 5710 / NBRC 13948 / NRRL B-527 / VKM B-1787 / 2291 / W).